Reading from the N-terminus, the 275-residue chain is 3-methyl-2-oxobutanoate hydroxymethyltransferase (275 aa).

Asp-44 and Asp-83 together coordinate Mg(2+). Residues Asp-44–Ser-45, Asp-83, and Lys-113 contribute to the 3-methyl-2-oxobutanoate site. Glu-115 serves as a coordination point for Mg(2+). Glu-182 serves as the catalytic Proton acceptor.

This sequence belongs to the PanB family. As to quaternary structure, homodecamer; pentamer of dimers. Mg(2+) is required as a cofactor.

Its subcellular location is the cytoplasm. The enzyme catalyses 3-methyl-2-oxobutanoate + (6R)-5,10-methylene-5,6,7,8-tetrahydrofolate + H2O = 2-dehydropantoate + (6S)-5,6,7,8-tetrahydrofolate. The protein operates within cofactor biosynthesis; (R)-pantothenate biosynthesis; (R)-pantoate from 3-methyl-2-oxobutanoate: step 1/2. In terms of biological role, catalyzes the reversible reaction in which hydroxymethyl group from 5,10-methylenetetrahydrofolate is transferred onto alpha-ketoisovalerate to form ketopantoate. This Enterococcus faecalis (strain ATCC 700802 / V583) protein is 3-methyl-2-oxobutanoate hydroxymethyltransferase.